A 309-amino-acid chain; its full sequence is Carbamate kinase 2 (309 aa).

This sequence belongs to the carbamate kinase family.

It localises to the cytoplasm. It catalyses the reaction hydrogencarbonate + NH4(+) + ATP = carbamoyl phosphate + ADP + H2O + H(+). It functions in the pathway metabolic intermediate metabolism; carbamoyl phosphate degradation; CO(2) and NH(3) from carbamoyl phosphate: step 1/1. The sequence is that of Carbamate kinase 2 (arcC2) from Staphylococcus epidermidis (strain ATCC 12228 / FDA PCI 1200).